We begin with the raw amino-acid sequence, 789 residues long: Cell pattern formation-associated protein stuA (789 aa).

Disordered regions lie at residues 50–131 (PALS…NTVG) and 205–224 (PGGV…SVSS). 3 stretches are compositionally biased toward polar residues: residues 55-69 (PTAS…SYRT), 76-88 (ASHN…SLSG), and 115-131 (LDSS…NTVG). One can recognise an HTH APSES-type domain in the interval 272–378 (RVTATLWEDE…HNIGGLLYHP (107 aa)). Positions 306-327 (GTKLLNVAGMTRGRRDGILKSE) form a DNA-binding region, H-T-H motif. 3 disordered regions span residues 389–459 (QESQ…ASSL), 487–543 (SIDT…YAPQ), and 616–789 (HDSA…ARRR). Polar residues-rich tracts occupy residues 419 to 438 (LQTP…SQSA), 487 to 529 (SIDT…SKSY), 620 to 636 (GYNT…NPSV), 645 to 667 (QLAS…TPRT), and 676 to 713 (SGYN…SVAS). A nuclear localization domain region spans residues 731-758 (KRMREDDDVDQIVRPDSRGAEYESKRRK). The segment covering 741–754 (QIVRPDSRGAEYES) has biased composition (basic and acidic residues).

This sequence belongs to the EFG1/PHD1/stuA family.

The protein resides in the nucleus. In terms of biological role, transcription factor that regulates asexual reproduction. Binds the StuA-response elements (StRE) with the consensus sequence 5'-(A/T)CGCG(T/A)N(A/C)-3' at the promoters of target genes. This chain is Cell pattern formation-associated protein stuA, found in Aspergillus flavus (strain ATCC 200026 / FGSC A1120 / IAM 13836 / NRRL 3357 / JCM 12722 / SRRC 167).